Reading from the N-terminus, the 162-residue chain is Caveolin-2 (162 aa).

The Cytoplasmic portion of the chain corresponds to 1–86 (MGLETEKADV…FEISKYVIYK (86 aa)). Tyrosine 19 is subject to Phosphotyrosine; by SRC. Residues serine 20 and serine 23 each carry the phosphoserine modification. A Phosphotyrosine; by SRC modification is found at tyrosine 27. At serine 36 the chain carries Phosphoserine. An intramembrane region (helical) is located at residues 87–107 (FLTVFLAIPLAFTAGILFATL). Over 108-162 (SCLHIWIIMPFVKTCLMVLPSVQTIWRSVTDVIIAPLCTSIGRICSSVSLQVSHD) the chain is Cytoplasmic.

This sequence belongs to the caveolin family. As to quaternary structure, monomer or homodimer. Interacts with CAV1; the interaction forms a stable heterooligomeric complex that is required for targeting to lipid rafts and for caveolae formation. Tyrosine phosphorylated forms do not form heterooligomers with the Tyr-19-phosphorylated form existing as a monomer or dimer, and the Tyr-27-form as a monomer only. Interacts (tyrosine phosphorylated form) with the SH2 domain-containing proteins, RASA1, NCK1 and SRC. Interacts (tyrosine phosphorylated form) with INSR, the interaction (Tyr-27-phosphorylated form) is increased on insulin stimulation. Interacts (Tyr-19 phosphorylated form) with MAPK1 (phosphorylated form); the interaction, promoted by insulin, leads to nuclear location and MAPK1 activation. Interacts with STAT3; the interaction is increased on insulin-induced tyrosine phosphorylation leading to STAT activation. Post-translationally, phosphorylated on serine and tyrosine residues. CAV1 promotes phosphorylation on Ser-23 which then targets the complex to the plasma membrane, lipid rafts and caveolae. Phosphorylation on Ser-36 appears to modulate mitosis in endothelial cells. Phosphorylation on both Tyr-19 and Tyr-27 is required for insulin-induced 'Ser-727' phosphorylation of STAT3 and its activation. Phosphorylation on Tyr-19 is required for insulin-induced phosphorylation of MAPK1 and DNA binding of STAT3. Tyrosine phosphorylation is induced by both EGF and insulin (By. similarity).

The protein resides in the nucleus. The protein localises to the cytoplasm. It localises to the golgi apparatus membrane. Its subcellular location is the cell membrane. It is found in the membrane. The protein resides in the caveola. In terms of biological role, may act as a scaffolding protein within caveolar membranes. Interacts directly with G-protein alpha subunits and can functionally regulate their activity. Acts as an accessory protein in conjunction with CAV1 in targeting to lipid rafts and driving caveolae formation. The Ser-36 phosphorylated form has a role in modulating mitosis in endothelial cells. Positive regulator of cellular mitogenesis of the MAPK signaling pathway. Required for the insulin-stimulated nuclear translocation and activation of MAPK1 and STAT3, and the subsequent regulation of cell cycle progression. The protein is Caveolin-2 (CAV2) of Atelerix albiventris (Middle-African hedgehog).